The chain runs to 189 residues: Apolipoprotein D (189 aa).

The signal sequence occupies residues 1–20 (MVMLLLLLSALAGLFGAAEG). Position 21 is a pyrrolidone carboxylic acid (glutamine 21). 2 cysteine pairs are disulfide-bonded: cysteine 28–cysteine 134 and cysteine 61–cysteine 185. Asparagine 65 and asparagine 98 each carry an N-linked (GlcNAc...) (complex) asparagine glycan.

It belongs to the calycin superfamily. Lipocalin family. As to quaternary structure, homodimer. In plasma, also exists as a disulfide-linked heterodimer with APOA2. N-glycosylated. N-glycan heterogeneity at Asn-65: Hex5HexNAc4 (major) and Hex6HexNAc5 (minor); at Asn-98: Hex5HexNAc4 (minor), dHex1Hex5HexNAc4 (major), dHex1Hex6HexNAc5 (minor) and dHex1Hex7HexNAc6 (minor). In terms of tissue distribution, expressed in liver, intestine, pancreas, kidney, placenta, adrenal, spleen, fetal brain tissue and tears.

It is found in the secreted. Functionally, APOD occurs in the macromolecular complex with lecithin-cholesterol acyltransferase. It is probably involved in the transport and binding of bilin. Appears to be able to transport a variety of ligands in a number of different contexts. The sequence is that of Apolipoprotein D (APOD) from Homo sapiens (Human).